A 353-amino-acid chain; its full sequence is RNA 3'-terminal phosphate cyclase (353 aa).

Residues Gln-103 and 297–301 (HLADQ) each bind ATP. The active-site Tele-AMP-histidine intermediate is the His-322.

Belongs to the RNA 3'-terminal cyclase family. Type 1 subfamily.

It is found in the cytoplasm. It catalyses the reaction a 3'-end 3'-phospho-ribonucleotide-RNA + ATP = a 3'-end 2',3'-cyclophospho-ribonucleotide-RNA + AMP + diphosphate. Catalyzes the conversion of 3'-phosphate to a 2',3'-cyclic phosphodiester at the end of RNA. The mechanism of action of the enzyme occurs in 3 steps: (A) adenylation of the enzyme by ATP; (B) transfer of adenylate to an RNA-N3'P to produce RNA-N3'PP5'A; (C) and attack of the adjacent 2'-hydroxyl on the 3'-phosphorus in the diester linkage to produce the cyclic end product. The biological role of this enzyme is unknown but it is likely to function in some aspects of cellular RNA processing. The sequence is that of RNA 3'-terminal phosphate cyclase from Salmonella heidelberg (strain SL476).